The sequence spans 641 residues: Threonine--tRNA ligase (641 aa).

In terms of domain architecture, TGS spans 1-61 (MPIITLPDGT…TQNSHIQIIT (61 aa)). The interval 242–533 (DHRKLGKKYS…LIENYSGNFP (292 aa)) is catalytic. Positions 333, 384, and 510 each coordinate Zn(2+).

Belongs to the class-II aminoacyl-tRNA synthetase family. In terms of assembly, homodimer. Requires Zn(2+) as cofactor.

The protein localises to the cytoplasm. The catalysed reaction is tRNA(Thr) + L-threonine + ATP = L-threonyl-tRNA(Thr) + AMP + diphosphate + H(+). Its function is as follows. Catalyzes the attachment of threonine to tRNA(Thr) in a two-step reaction: L-threonine is first activated by ATP to form Thr-AMP and then transferred to the acceptor end of tRNA(Thr). Also edits incorrectly charged L-seryl-tRNA(Thr). The chain is Threonine--tRNA ligase from Prochlorococcus marinus (strain NATL2A).